We begin with the raw amino-acid sequence, 502 residues long: Probable cytochrome P450 28d1 (502 aa).

A heme-binding site is contributed by Cys446.

Belongs to the cytochrome P450 family. The cofactor is heme.

It is found in the endoplasmic reticulum membrane. Its subcellular location is the microsome membrane. In terms of biological role, may be involved in the metabolism of insect hormones and in the breakdown of synthetic insecticides. The chain is Probable cytochrome P450 28d1 (Cyp28d1) from Drosophila melanogaster (Fruit fly).